Here is a 734-residue protein sequence, read N- to C-terminus: Diacylglycerol kinase alpha (734 aa).

EF-hand domains lie at 109-144 (RPED…MMRM) and 154-189 (ELRP…TVPL). Ca(2+) is bound by residues aspartate 122, aspartate 124, asparagine 126, glutamate 133, aspartate 167, aspartate 169, serine 171, serine 173, and glutamate 178. Phorbol-ester/DAG-type zinc fingers lie at residues 204 to 252 (QHMW…ALPC) and 268 to 318 (THVW…GHEC). Residues 358 to 505 (NLSTSEALRI…MDRWSVEVIP (148 aa)) are necessary and sufficient for the diacylglycerol kinase activity. A DAGKc domain is found at 371–505 (SNTHPLLVFV…MDRWSVEVIP (135 aa)). Position 483 is an N6-acetyllysine (lysine 483).

The protein belongs to the eukaryotic diacylglycerol kinase family. In terms of assembly, monomer.

It localises to the cytoplasm. The protein resides in the cytosol. The enzyme catalyses a 1,2-diacyl-sn-glycerol + ATP = a 1,2-diacyl-sn-glycero-3-phosphate + ADP + H(+). It carries out the reaction a 1-O-alkyl-sn-glycerol + ATP = a 1-O-alkyl-sn-glycero-3-phosphate + ADP + H(+). It catalyses the reaction 1-O-alkyl-2-acyl-sn-glycerol + ATP = 1-O-alkyl-2-acyl-sn-glycero-3-phosphate + ADP + H(+). The catalysed reaction is 1,2-dihexadecanoyl-sn-glycerol + ATP = 1,2-dihexadecanoyl-sn-glycero-3-phosphate + ADP + H(+). The enzyme catalyses 1-hexadecanoyl-2-(9Z-octadecenoyl)-sn-glycerol + ATP = 1-hexadecanoyl-2-(9Z-octadecenoyl)-sn-glycero-3-phosphate + ADP + H(+). It carries out the reaction 2-(9Z-octadecenoyl)-glycerol + ATP = 2-(9Z-octadecenoyl)-sn-glycero-3-phosphate + ADP + H(+). It catalyses the reaction 1,2-di-(9Z-octadecenoyl)-sn-glycerol + ATP = 1,2-di-(9Z-octadecenoyl)-sn-glycero-3-phosphate + ADP + H(+). The catalysed reaction is 1-octadecanoyl-2-(5Z,8Z,11Z,14Z-eicosatetraenoyl)-sn-glycerol + ATP = 1-octadecanoyl-2-(5Z,8Z,11Z,14Z-eicosatetraenoyl)-sn-glycero-3-phosphate + ADP + H(+). The enzyme catalyses 1,2-didecanoyl-sn-glycerol + ATP = 1,2-didecanoyl-sn-glycero-3-phosphate + ADP + H(+). It carries out the reaction 1-O-hexadecyl-2-acetyl-sn-glycerol + ATP = 1-O-hexadecyl-2-acetyl-sn-glycero-3-phosphate + ADP + H(+). It catalyses the reaction 1-O-hexadecyl-2-(5Z,8Z,11Z,14Z-eicosatetraenoyl)-sn-glycerol + ATP = 1-O-hexadecyl-2-(5Z,8Z,11Z,14Z-eicosatetraenoyl)-sn-glycero-3-phosphate + ADP + H(+). The catalysed reaction is 1-O-hexadecyl-2-(9Z-octadecenoyl)-sn-glycerol + ATP = 1-O-hexadecyl-2-(9Z-octadecenoyl)-sn-glycero-3-phosphate + ADP + H(+). The enzyme catalyses 1-O-hexadecyl-sn-glycerol + ATP = 1-O-hexadecyl-sn-glycero-3-phosphate + ADP + H(+). It participates in lipid metabolism; glycerolipid metabolism. With respect to regulation, stimulated by calcium and phosphatidylserine. Functionally, diacylglycerol kinase that converts diacylglycerol/DAG into phosphatidic acid/phosphatidate/PA and regulates the respective levels of these two bioactive lipids. Thereby, acts as a central switch between the signaling pathways activated by these second messengers with different cellular targets and opposite effects in numerous biological processes. Also plays an important role in the biosynthesis of complex lipids. Can also phosphorylate 1-alkyl-2-acylglycerol in vitro as efficiently as diacylglycerol provided it contains an arachidonoyl group. Also involved in the production of alkyl-lysophosphatidic acid, another bioactive lipid, through the phosphorylation of 1-alkyl-2-acetyl glycerol. In Sus scrofa (Pig), this protein is Diacylglycerol kinase alpha (DGKA).